A 383-amino-acid chain; its full sequence is Subtelomeric hrmA-associated cluster protein AFUB_078970 (383 aa).

2 disordered regions span residues 118–145 (NPVS…KDDD) and 249–318 (QATQ…SARP). Over residues 119–134 (PVSEVPESPPSTVKSS) the composition is skewed to low complexity. One can recognise a Myb-like domain in the interval 318 to 364 (PYSAAEDDILQTLVARGLAWEEIEKEFGLRFAKRTMRSLQMRWSRKL).

Myb-like domain-containing protein; part of the subtelomeric hrmA-associated cluster (HAC) containing genes that alter the hyphal surface (such as reduced total chitin or increased beta-glucan exposure) and perturb inter-hyphal interactions within the developing biofilms, resulting in a loss of vertically aligned polarized growing filaments. Consequently, this hypoxia-typic morphotype (called H-MORPH) with altered biofilm architecture leads to increased hypoxia fitness, increased host inflammation, rapid disease progression, and mortality in a murine model of invasive aspergillosis. The polypeptide is Subtelomeric hrmA-associated cluster protein AFUB_078970 (Aspergillus fumigatus (strain CBS 144.89 / FGSC A1163 / CEA10) (Neosartorya fumigata)).